An 840-amino-acid polypeptide reads, in one-letter code: Translation initiation factor IF-2 (840 aa).

Positions 95–143 are enriched in basic and acidic residues; that stretch reads RSPDEIEAERQRELEEQRAAEEAERLKAEEAAARQRAEEEARKAEEAAR. Disordered stretches follow at residues 95–155 and 173–256; these read RSPD…ATAG and PAAV…PTGP. Over residues 144–155 the composition is skewed to low complexity; the sequence is AKAAQEAAATAG. Basic and acidic residues-rich tracts occupy residues 175-191 and 223-232; these read AVEERKKEEPRRVPKRD and STDEESDGYR. A compositionally biased stretch (basic residues) spans 233 to 247; sequence RGGRGGKSKLKKRNQ. The region spanning 340-509 is the tr-type G domain; sequence TRAPVVTVMG…LLQAEVLELK (170 aa). The interval 349–356 is G1; sequence GHVDHGKT. Residue 349–356 coordinates GTP; sequence GHVDHGKT. Residues 374 to 378 form a G2 region; the sequence is GITQH. Residues 395 to 398 are G3; sequence DTPG. GTP contacts are provided by residues 395 to 399 and 449 to 452; these read DTPGH and NKID. The G4 stretch occupies residues 449 to 452; it reads NKID. Residues 485–487 are G5; that stretch reads SAK.

The protein belongs to the TRAFAC class translation factor GTPase superfamily. Classic translation factor GTPase family. IF-2 subfamily.

The protein localises to the cytoplasm. Its function is as follows. One of the essential components for the initiation of protein synthesis. Protects formylmethionyl-tRNA from spontaneous hydrolysis and promotes its binding to the 30S ribosomal subunits. Also involved in the hydrolysis of GTP during the formation of the 70S ribosomal complex. This chain is Translation initiation factor IF-2, found in Pseudomonas aeruginosa (strain ATCC 15692 / DSM 22644 / CIP 104116 / JCM 14847 / LMG 12228 / 1C / PRS 101 / PAO1).